The primary structure comprises 365 residues: Magnesium-chelatase subunit ChlI homolog (365 aa).

Position 40-47 (40-47) interacts with ATP; that stretch reads EKGTAKST. Residues 340-365 form a disordered region; that stretch reads FKQQNNKDNEEKEEHKDDDVKKNMMK. The span at 344 to 365 shows a compositional bias: basic and acidic residues; sequence NNKDNEEKEEHKDDDVKKNMMK.

Belongs to the Mg-chelatase subunits D/I family.

This Methanocaldococcus jannaschii (strain ATCC 43067 / DSM 2661 / JAL-1 / JCM 10045 / NBRC 100440) (Methanococcus jannaschii) protein is Magnesium-chelatase subunit ChlI homolog.